Reading from the N-terminus, the 481-residue chain is GTPase Obg (481 aa).

In terms of domain architecture, Obg spans 2–159; that stretch reads TTFVDRVVLH…IDVVLELKSV (158 aa). Residues 160–330 form the OBG-type G domain; it reads ADVGLVGYPS…LMYAMGELVT (171 aa). GTP-binding positions include 166 to 173, 191 to 195, 212 to 215, 282 to 285, and 311 to 313; these read GYPSAGKS, FTTLV, DVPG, NKVD, and SAA. Residues S173 and T193 each contribute to the Mg(2+) site. The OCT domain maps to 348 to 426; sequence PKAVDDAGFT…IGEREFDWQP (79 aa). Over residues 439–452 the composition is skewed to basic and acidic residues; the sequence is GDQRLAEKSERPSA. A disordered region spans residues 439 to 481; it reads GDQRLAEKSERPSATERLAARKARRQRPEDEAEADEPVGDGEE. Residues 468-481 are compositionally biased toward acidic residues; sequence DEAEADEPVGDGEE.

This sequence belongs to the TRAFAC class OBG-HflX-like GTPase superfamily. OBG GTPase family. Monomer. Requires Mg(2+) as cofactor.

The protein localises to the cytoplasm. Functionally, an essential GTPase which binds GTP, GDP and possibly (p)ppGpp with moderate affinity, with high nucleotide exchange rates and a fairly low GTP hydrolysis rate. Plays a role in control of the cell cycle, stress response, ribosome biogenesis and in those bacteria that undergo differentiation, in morphogenesis control. In Salinispora tropica (strain ATCC BAA-916 / DSM 44818 / JCM 13857 / NBRC 105044 / CNB-440), this protein is GTPase Obg.